A 325-amino-acid polypeptide reads, in one-letter code: ATP phosphoribosyltransferase (325 aa).

Belongs to the ATP phosphoribosyltransferase family. Long subfamily. It depends on Mg(2+) as a cofactor.

Its subcellular location is the cytoplasm. It carries out the reaction 1-(5-phospho-beta-D-ribosyl)-ATP + diphosphate = 5-phospho-alpha-D-ribose 1-diphosphate + ATP. Its pathway is amino-acid biosynthesis; L-histidine biosynthesis; L-histidine from 5-phospho-alpha-D-ribose 1-diphosphate: step 1/9. With respect to regulation, feedback inhibited by histidine. Catalyzes the condensation of ATP and 5-phosphoribose 1-diphosphate to form N'-(5'-phosphoribosyl)-ATP (PR-ATP). Has a crucial role in the pathway because the rate of histidine biosynthesis seems to be controlled primarily by regulation of HisG enzymatic activity. This Nitrobacter hamburgensis (strain DSM 10229 / NCIMB 13809 / X14) protein is ATP phosphoribosyltransferase.